A 488-amino-acid chain; its full sequence is DNA polymerase II small subunit (488 aa).

The protein belongs to the DNA polymerase delta/II small subunit family. In terms of assembly, heterodimer of a large subunit and a small subunit.

The enzyme catalyses DNA(n) + a 2'-deoxyribonucleoside 5'-triphosphate = DNA(n+1) + diphosphate. The catalysed reaction is Exonucleolytic cleavage in the 3'- to 5'-direction to yield nucleoside 5'-phosphates.. Possesses two activities: a DNA synthesis (polymerase) and an exonucleolytic activity that degrades single-stranded DNA in the 3' to 5' direction. Has a template-primer preference which is characteristic of a replicative DNA polymerase. This Archaeoglobus fulgidus (strain ATCC 49558 / DSM 4304 / JCM 9628 / NBRC 100126 / VC-16) protein is DNA polymerase II small subunit (polB).